Consider the following 311-residue polypeptide: Aspartate carbamoyltransferase catalytic subunit (311 aa).

Positions 55 and 56 each coordinate carbamoyl phosphate. Lysine 85 lines the L-aspartate pocket. Residues arginine 106, histidine 135, and glutamine 138 each coordinate carbamoyl phosphate. L-aspartate contacts are provided by arginine 168 and arginine 230. Residues leucine 268 and proline 269 each contribute to the carbamoyl phosphate site.

This sequence belongs to the aspartate/ornithine carbamoyltransferase superfamily. ATCase family. In terms of assembly, heterododecamer (2C3:3R2) of six catalytic PyrB chains organized as two trimers (C3), and six regulatory PyrI chains organized as three dimers (R2).

The catalysed reaction is carbamoyl phosphate + L-aspartate = N-carbamoyl-L-aspartate + phosphate + H(+). It functions in the pathway pyrimidine metabolism; UMP biosynthesis via de novo pathway; (S)-dihydroorotate from bicarbonate: step 2/3. Functionally, catalyzes the condensation of carbamoyl phosphate and aspartate to form carbamoyl aspartate and inorganic phosphate, the committed step in the de novo pyrimidine nucleotide biosynthesis pathway. This chain is Aspartate carbamoyltransferase catalytic subunit, found in Serratia proteamaculans (strain 568).